The chain runs to 98 residues: NADH-ubiquinone oxidoreductase chain 4L (98 aa).

3 consecutive transmembrane segments (helical) span residues 1–21 (MVLIKLNIIMAFMLALTGVLI), 36–56 (MMLSLFIFMAAVITHFHMFSI), and 61–81 (LILLVFSACEAGVGLALLVTI).

Belongs to the complex I subunit 4L family. As to quaternary structure, core subunit of respiratory chain NADH dehydrogenase (Complex I) which is composed of 45 different subunits.

It is found in the mitochondrion inner membrane. The enzyme catalyses a ubiquinone + NADH + 5 H(+)(in) = a ubiquinol + NAD(+) + 4 H(+)(out). In terms of biological role, core subunit of the mitochondrial membrane respiratory chain NADH dehydrogenase (Complex I) which catalyzes electron transfer from NADH through the respiratory chain, using ubiquinone as an electron acceptor. Part of the enzyme membrane arm which is embedded in the lipid bilayer and involved in proton translocation. In Metachirus nudicaudatus (Brown four-eyed opossum), this protein is NADH-ubiquinone oxidoreductase chain 4L (MT-ND4L).